The sequence spans 440 residues: Phosphatidylglycerol--prolipoprotein diacylglyceryl transferase (440 aa).

The next 4 membrane-spanning stretches (helical) occupy residues 21 to 41, 53 to 73, 96 to 116, and 122 to 142; these read VPIR…LLIG, GVIY…GRLY, IWDG…GAWI, and GIPL…AQAI. Arg144 is a binding site for a 1,2-diacyl-sn-glycero-3-phospho-(1'-sn-glycerol). The next 2 membrane-spanning stretches (helical) occupy residues 189–209 and 256–276; these read VALV…LIFV and INSF…MAAP. The tract at residues 280-440 is disordered; the sequence is EDPESLRGNQ…ARLRDRLSGR (161 aa). Residues 299 to 330 show a composition bias toward low complexity; sequence EPATVAATTEAATEGVAAPADGAEAAGADATA. Residues 332 to 346 are compositionally biased toward basic and acidic residues; the sequence is RPEESAEPDVEKPES. Positions 347–417 are enriched in acidic residues; the sequence is EETEAEAAEE…PEQPVAEEPE (71 aa). Residues 424–440 are compositionally biased toward basic and acidic residues; that stretch reads ETKRRWGARLRDRLSGR.

This sequence belongs to the Lgt family.

It localises to the cell membrane. The enzyme catalyses L-cysteinyl-[prolipoprotein] + a 1,2-diacyl-sn-glycero-3-phospho-(1'-sn-glycerol) = an S-1,2-diacyl-sn-glyceryl-L-cysteinyl-[prolipoprotein] + sn-glycerol 1-phosphate + H(+). Its pathway is protein modification; lipoprotein biosynthesis (diacylglyceryl transfer). Catalyzes the transfer of the diacylglyceryl group from phosphatidylglycerol to the sulfhydryl group of the N-terminal cysteine of a prolipoprotein, the first step in the formation of mature lipoproteins. The polypeptide is Phosphatidylglycerol--prolipoprotein diacylglyceryl transferase (Mycobacterium avium (strain 104)).